Reading from the N-terminus, the 158-residue chain is MDEEAAKPRDSTVNQQHQYYYGTFQGVANFPTPTPPPQFMQPQHPITTFPGHAYQNLQGHGGGVNYAQGFPVVVPDYTVVEVRPMIEHELPCCGLGMGWFLFIMGFLFGGIPWYLGAFIVLVTSVDHREKAGYVACSIASVVYLIAVMLGMTGDINIW.

Belongs to the eukaryotic ribosomal protein eL20 family.

The protein is Large ribosomal subunit protein eL20z (RPL18A1) of Arabidopsis thaliana (Mouse-ear cress).